A 617-amino-acid chain; its full sequence is Vacuolar protein sorting-associated protein 33B (617 aa).

Ala-2 bears the N-acetylalanine mark.

It belongs to the STXBP/unc-18/SEC1 family. Interacts with RAB11A and VIPAS39. Associates with adapter protein complex 3 (AP-3), clathrin:AP-3 and clathrin:HGS complexes. Phosphorylated on tyrosine residues.

The protein localises to the late endosome membrane. The protein resides in the lysosome membrane. Its subcellular location is the early endosome. It is found in the cytoplasmic vesicle. It localises to the clathrin-coated vesicle. The protein localises to the recycling endosome. Its function is as follows. May play a role in vesicle-mediated protein trafficking to lysosomal compartments and in membrane docking/fusion reactions of late endosomes/lysosomes. Required for proper trafficking and targeting of the collagen-modifying enzyme lysyl hydroxylase 3 (LH3) to intracellular collagen. Mediates phagolysosomal fusion in macrophages. Proposed to be involved in endosomal maturation implicating in part VIPAS39. In epithelial cells, the VPS33B:VIPAS39 complex may play a role in the apical RAB11A-dependentrecycling pathway and in the maintenance of the apical-basolateral polarity. Seems to be involved in the sorting of specific cargos from the trans-Golgi network to alpha-granule-destined multivesicular bodies (MVBs) promoting MVBs maturation in megakaryocytes. This Mus musculus (Mouse) protein is Vacuolar protein sorting-associated protein 33B (Vps33b).